A 423-amino-acid chain; its full sequence is MPVTAIVGGQWGDEGKGKVVDMLAQEADYVVRFSGGDNAGHTVINPMGEFKLHIIPSGVFYPGVKCIIGNGVVINPDVFIRERNELISRGVDVKNVFISDRAHLVLPYHILLDGLEEEARGNKSLGTTRRGIGPAFVDKYARMGIRVGDLLLPEYLHERLEYVLECKNQILTKVYDAAPISLDEIYETCLKWGKELAPNIKETTHIIEEAISQDKKIIMEGAQGALLDPDFGTYPYGTSSSPLAAGGCLGIGIGPASVSATLGVFKAYSTRVGGGPMPTELLDKTGDIIRDEAHEYGTTTGRPRRIGWFDAVAGRFSCQINGMTTAIMTRLDIMDILPAISICTAYELNGKIIKYFPANSGELAKCKPVYEEMPGWLCSTKEVRCYDDLPLAAKNYICRIEELIGCQMSAVCIGPSREQTIYK.

GTP is bound by residues 12–18 (GDEGKGK) and 40–42 (GHT). Residue Asp-13 is the Proton acceptor of the active site. Residues Asp-13 and Gly-40 each coordinate Mg(2+). IMP-binding positions include 13-16 (DEGK), 38-41 (NAGH), Thr-128, Arg-142, Gln-223, Thr-238, and Arg-302. Residue His-41 is the Proton donor of the active site. 298 to 304 (TTTGRPR) contributes to the substrate binding site. Residues Arg-304, 330 to 332 (RLD), and 412 to 414 (CIG) contribute to the GTP site.

This sequence belongs to the adenylosuccinate synthetase family. In terms of assembly, homodimer. It depends on Mg(2+) as a cofactor.

The protein localises to the cytoplasm. The enzyme catalyses IMP + L-aspartate + GTP = N(6)-(1,2-dicarboxyethyl)-AMP + GDP + phosphate + 2 H(+). Its pathway is purine metabolism; AMP biosynthesis via de novo pathway; AMP from IMP: step 1/2. In terms of biological role, plays an important role in the de novo pathway of purine nucleotide biosynthesis. Catalyzes the first committed step in the biosynthesis of AMP from IMP. This is Adenylosuccinate synthetase from Dehalococcoides mccartyi (strain ATCC BAA-2266 / KCTC 15142 / 195) (Dehalococcoides ethenogenes (strain 195)).